Consider the following 818-residue polypeptide: LisH domain-containing protein ARMC9 (818 aa).

Positions 7-39 constitute a LisH domain; it reads HESELLGLVKEYLDFAEFEDTLKTFSKECKIKG. Residues 204-230 adopt a coiled-coil conformation; the sequence is QSNKEILQQLHQQLVEAERRSVTYLKR. Position 582 is a phosphoserine (serine 582). Disordered regions lie at residues 642–755 and 790–818; these read VQWS…TTRE and SSCG…SHRK. Low complexity predominate over residues 701 to 711; it reads STPESCVSSSS. Over residues 792–818 the composition is skewed to polar residues; the sequence is CGPQQASRPGSTASSTRGLPSSQSHRK.

As to quaternary structure, interacts with TOGARAM1, CCDC66, CEP104, CSPP1 and CEP290. Interacts with NDUFAF2. As to expression, strongly expressed in most melanomas and melanocytes. Weakly expressed in the testis.

It localises to the cytoplasm. The protein localises to the cytoskeleton. It is found in the cilium basal body. The protein resides in the cell projection. Its subcellular location is the cilium. It localises to the microtubule organizing center. The protein localises to the centrosome. It is found in the centriole. Its function is as follows. Involved in ciliogenesis. It is required for appropriate acetylation and polyglutamylation of ciliary microtubules, and regulation of cilium length. Acts as a positive regulator of hedgehog (Hh)signaling. May participate in the trafficking and/or retention of GLI2 and GLI3 proteins at the ciliary tip. The sequence is that of LisH domain-containing protein ARMC9 from Homo sapiens (Human).